Reading from the N-terminus, the 106-residue chain is uncharacterized protein (106 aa).

Residues 9 to 27 (ALAALAFTLGLIGLAAWAL) traverse the membrane as a helical segment. The segment at 84-106 (TPKGPPPASALSPSPVAEPEPVV) is disordered.

Belongs to the FliO/MopB family.

The protein resides in the cell membrane. It localises to the bacterial flagellum basal body. This is an uncharacterized protein from Caulobacter vibrioides (strain ATCC 19089 / CIP 103742 / CB 15) (Caulobacter crescentus).